Consider the following 433-residue polypeptide: Glutamate-1-semialdehyde 2,1-aminomutase (433 aa).

An N6-(pyridoxal phosphate)lysine modification is found at Lys265.

This sequence belongs to the class-III pyridoxal-phosphate-dependent aminotransferase family. HemL subfamily. As to quaternary structure, homodimer. It depends on pyridoxal 5'-phosphate as a cofactor.

The protein resides in the cytoplasm. The catalysed reaction is (S)-4-amino-5-oxopentanoate = 5-aminolevulinate. It participates in porphyrin-containing compound metabolism; protoporphyrin-IX biosynthesis; 5-aminolevulinate from L-glutamyl-tRNA(Glu): step 2/2. The polypeptide is Glutamate-1-semialdehyde 2,1-aminomutase (Shewanella denitrificans (strain OS217 / ATCC BAA-1090 / DSM 15013)).